The following is a 496-amino-acid chain: Cytochrome f, chloroplastic (496 aa).

Residues 1–149 (MASLQTPVMV…VGAAAGSANA (149 aa)) constitute a chloroplast transit peptide. Heme-binding residues include Tyr-150, Cys-170, Cys-173, and His-174. Residues 462–481 (VQAFLFFSFTVLATQTLLVV) form a helical membrane-spanning segment.

It belongs to the cytochrome f family. Interacts with plastocyanin and Rieske iron-sulfur protein. It depends on heme as a cofactor.

Its subcellular location is the plastid. The protein localises to the chloroplast thylakoid membrane. Translocates protons across the thylakoid membrane and transfers electrons from photosystem II to photosystem I. It receives electrons from the Rieske iron-sulfur protein and passes them to plastocyanin. The polypeptide is Cytochrome f, chloroplastic (petA) (Euglena gracilis).